A 167-amino-acid polypeptide reads, in one-letter code: Phosphopantetheine adenylyltransferase (167 aa).

Ser-10 contributes to the substrate binding site. Residues 10–11 and His-18 contribute to the ATP site; that span reads SF. Positions 42, 79, and 93 each coordinate substrate. Residues 94–96, Glu-104, and 129–135 each bind ATP; these read GLR and VRHITAT.

It belongs to the bacterial CoaD family. Homohexamer. Mg(2+) serves as cofactor.

It is found in the cytoplasm. It carries out the reaction (R)-4'-phosphopantetheine + ATP + H(+) = 3'-dephospho-CoA + diphosphate. It participates in cofactor biosynthesis; coenzyme A biosynthesis; CoA from (R)-pantothenate: step 4/5. In terms of biological role, reversibly transfers an adenylyl group from ATP to 4'-phosphopantetheine, yielding dephospho-CoA (dPCoA) and pyrophosphate. The polypeptide is Phosphopantetheine adenylyltransferase (Beijerinckia indica subsp. indica (strain ATCC 9039 / DSM 1715 / NCIMB 8712)).